The following is a 344-amino-acid chain: Anthranilate phosphoribosyltransferase (344 aa).

5-phospho-alpha-D-ribose 1-diphosphate is bound by residues glycine 81, 84–85 (GD), serine 89, 91–94 (NIST), 109–117 (KHGNRALSS), and alanine 121. Residue glycine 81 coordinates anthranilate. Serine 93 contacts Mg(2+). Asparagine 112 lines the anthranilate pocket. Arginine 167 provides a ligand contact to anthranilate. The Mg(2+) site is built by aspartate 226 and glutamate 227.

The protein belongs to the anthranilate phosphoribosyltransferase family. As to quaternary structure, homodimer. Mg(2+) serves as cofactor.

It catalyses the reaction N-(5-phospho-beta-D-ribosyl)anthranilate + diphosphate = 5-phospho-alpha-D-ribose 1-diphosphate + anthranilate. It participates in amino-acid biosynthesis; L-tryptophan biosynthesis; L-tryptophan from chorismate: step 2/5. Functionally, catalyzes the transfer of the phosphoribosyl group of 5-phosphorylribose-1-pyrophosphate (PRPP) to anthranilate to yield N-(5'-phosphoribosyl)-anthranilate (PRA). The polypeptide is Anthranilate phosphoribosyltransferase (Xanthobacter autotrophicus (strain ATCC BAA-1158 / Py2)).